Reading from the N-terminus, the 363-residue chain is Peroxidase (363 aa).

A signal peptide spans 1–20 (MKLSLLSTFAAVIIGALALP). The residue at position 21 (Q21) is a Pyrrolidone carboxylic acid. 4 cysteine pairs are disulfide-bonded: C31/C43, C42/C312, C62/C148, and C276/C341. H75 acts as the Proton acceptor in catalysis. Positions 76, 94, 96, and 98 each coordinate Ca(2+). The N-linked (GlcNAc...) (high mannose) asparagine glycan is linked to N162. Position 203 (H203) interacts with heme b. Residues S204, D221, T223, V226, and D228 each coordinate Ca(2+). S358 carries O-linked (Man...) serine glycosylation.

It belongs to the peroxidase family. Ligninase subfamily. Ca(2+) serves as cofactor. The cofactor is heme b.

It localises to the secreted. The enzyme catalyses 2 a phenolic donor + H2O2 = 2 a phenolic radical donor + 2 H2O. The sequence is that of Peroxidase (CIP1) from Coprinopsis cinerea (strain Okayama-7 / 130 / ATCC MYA-4618 / FGSC 9003) (Inky cap fungus).